A 517-amino-acid chain; its full sequence is Protein disulfide isomerase-like 1-2 (517 aa).

Residues 1–23 (MAVNLVLSFALAILISSSPTAVG) form the signal peptide. The region spanning 24–143 (VDATEELKEA…IVEYLKRQVG (120 aa)) is the Thioredoxin 1 domain. N41 carries an N-linked (GlcNAc...) asparagine glycan. Residues C61 and C64 each act as nucleophile in the active site. A disulfide bond links C61 and C64. N301 is a glycosylation site (N-linked (GlcNAc...) asparagine). Residues 357-484 (VEYGNLTPYV…IISFINENRG (128 aa)) enclose the Thioredoxin 2 domain. Active-site nucleophile residues include C407 and C410. Residues C407 and C410 are joined by a disulfide bond. Residues 514 to 517 (KDEL) carry the Prevents secretion from ER motif.

This sequence belongs to the protein disulfide isomerase family.

It is found in the endoplasmic reticulum lumen. It carries out the reaction Catalyzes the rearrangement of -S-S- bonds in proteins.. Acts as a protein-folding catalyst that interacts with nascent polypeptides to catalyze the formation, isomerization, and reduction or oxidation of disulfide bonds. May play a role in storage protein biogenesis. The protein is Protein disulfide isomerase-like 1-2 (PDIL1-2) of Oryza sativa subsp. japonica (Rice).